Consider the following 192-residue polypeptide: Xanthine phosphoribosyltransferase (192 aa).

The xanthine site is built by leucine 20 and asparagine 27. Alanine 128 to alanine 132 serves as a coordination point for 5-phospho-alpha-D-ribose 1-diphosphate. Lysine 156 is a binding site for xanthine.

The protein belongs to the purine/pyrimidine phosphoribosyltransferase family. Xpt subfamily. In terms of assembly, homodimer.

It is found in the cytoplasm. The catalysed reaction is XMP + diphosphate = xanthine + 5-phospho-alpha-D-ribose 1-diphosphate. The protein operates within purine metabolism; XMP biosynthesis via salvage pathway; XMP from xanthine: step 1/1. In terms of biological role, converts the preformed base xanthine, a product of nucleic acid breakdown, to xanthosine 5'-monophosphate (XMP), so it can be reused for RNA or DNA synthesis. In Ligilactobacillus salivarius (strain UCC118) (Lactobacillus salivarius), this protein is Xanthine phosphoribosyltransferase.